Reading from the N-terminus, the 551-residue chain is Cysteine desulfurase SufS (551 aa).

Residues 1–22 (MRPSSAAWICLLLRIANYTCYS) form the signal peptide. Residue Lys-327 is modified to N6-(pyridoxal phosphate)lysine. The active-site Cysteine persulfide intermediate is Cys-500.

The protein belongs to the class-V pyridoxal-phosphate-dependent aminotransferase family. Csd subfamily. In terms of assembly, monomer. Interacts with SufE; interaction enhances cysteine desulfurase activity of SufS. It depends on pyridoxal 5'-phosphate as a cofactor.

The protein resides in the plastid. It localises to the apicoplast. The enzyme catalyses (sulfur carrier)-H + L-cysteine = (sulfur carrier)-SH + L-alanine. Its pathway is cofactor biosynthesis; iron-sulfur cluster biosynthesis. In terms of biological role, catalyzes sulfur activation and mobilization in sulfur mobilization (SUF) pathway for iron-sulfur (Fe-S) cluster biogenesis. Active when in complex with a partner protein SufE. Required for apicoplast maintenance. Plays a role in the development of sporozoites in oocysts in mosquitoes. This is Cysteine desulfurase SufS from Plasmodium vivax.